The following is a 3284-amino-acid chain: Location of vulva defective 1 (3284 aa).

The first 21 residues, 1 to 21 (MKKSNFFVLLLLAISAIQIDG), serve as a signal peptide directing secretion. Disordered regions lie at residues 226–326 (ESTS…ITST), 350–505 (TTML…GTNP), 623–702 (VASS…ADST), 827–926 (STSE…ASTE), and 1043–1216 (TTTE…SLAT). Low complexity-rich tracts occupy residues 227 to 326 (STST…ITST) and 350 to 500 (TTML…TTSS). Residues 827 to 913 (STSEVTSTTS…PSDSSSASDS (87 aa)) are compositionally biased toward low complexity. Over residues 914–926 (MRTTTVDPDASTE) the composition is skewed to polar residues. Residues 1043-1057 (TTTETPPTTVSSSDD) show a composition bias toward low complexity. The span at 1060 to 1078 (GKTGGTGATGGTGGTGSGG) shows a compositional bias: gly residues. Positions 1079-1104 (SATTLSTGDAVRSTTSGSGSGQSSTG) are enriched in low complexity. Over residues 1105–1127 (SGAGGSGTTASGSGSGGSSGTGS) the composition is skewed to gly residues. The span at 1128-1138 (DGVNSGKTTAL) shows a compositional bias: polar residues. The segment covering 1163–1192 (GSGSDSNGSSGVSTKSSSGSDTSGSSDSSG) has biased composition (low complexity). The span at 1197-1216 (FSATAQPSTRTTKTRSSLAT) shows a compositional bias: polar residues. The GAIN-B domain occupies 2064–2227 (WNNSLQVEII…SVGAFNPTID (164 aa)). Residues C2181 and C2209 are joined by a disulfide bond. Positions 2181 to 2227 (CYFYQKTSDVFNSEGMYPSDGQGMQFVNCSTDHLTMFSVGAFNPTID) are GPS. The chain crosses the membrane as a helical span at residues 2245-2265 (VMIAAVFMLVVYGCLTINAII). Positions 2288-2411 (YMYVIAVETG…GDGETERLAR (124 aa)) constitute a PLAT domain. 10 helical membrane passes run 2453–2473 (DYSV…ITIL), 2496–2516 (IAFG…HILL), 2557–2577 (IIVF…MSLM), 2592–2612 (LILW…FLIL), 2672–2692 (LFIT…MVML), 2945–2965 (MLYI…YLYG), 2994–3014 (WNFM…AYTI), 3043–3063 (WEIV…CKMI), 3089–3109 (FGIA…AVLG), and 3144–3164 (FAFV…LQLY).

Belongs to the polycystin family. As to quaternary structure, interacts (via PLAT domain) with atp-2 (via N-terminus) and with kin-10 (via C-terminus). Interacts (via C-terminus) with isoform a of stam-1/pqn-19 (via C-terminus). Post-translationally, autoproteolytically processed at the GPS region of the GAIN-B domain; this cleavage modulates receptor activity. Exclusively expressed in a subset of three categories of adult male sensory neurons: ray neurons, hook neurons and head cephalic (CEM) neurons.

It localises to the membrane. The protein resides in the cell projection. Its subcellular location is the cilium. Required for two aspects of male mating behavior: response to hermaphrodite contact and vulva location. Acts in the same pathway as pkd-2 and atp-2 in response behavior. May be required for ciliary targeting of pkd-2. In Caenorhabditis elegans, this protein is Location of vulva defective 1 (lov-1).